A 142-amino-acid polypeptide reads, in one-letter code: Transcriptional regulator MraZ (142 aa).

2 SpoVT-AbrB domains span residues 5–48 (EFEY…PLCE) and 77–120 (AFDV…DKET).

This sequence belongs to the MraZ family. Forms oligomers.

It localises to the cytoplasm. It is found in the nucleoid. In Dehalococcoides mccartyi (strain ATCC BAA-2266 / KCTC 15142 / 195) (Dehalococcoides ethenogenes (strain 195)), this protein is Transcriptional regulator MraZ.